A 409-amino-acid polypeptide reads, in one-letter code: Na(+)/H(+) antiporter NhaA (409 aa).

Helical transmembrane passes span 13-33 (SGGI…NTFL), 58-78 (LILW…GLEL), 93-113 (IALP…IFYL), 120-140 (FALG…LGIL), 153-173 (IFLM…IALF), 176-196 (SELS…LFAL), 216-236 (VAVL…AFFI), 256-276 (LHGW…AGIS), 279-299 (GVGL…GLFV), 326-346 (FIQL…SLFI), and 363-383 (LAIL…LKFS).

Belongs to the NhaA Na(+)/H(+) (TC 2.A.33) antiporter family.

The protein resides in the cell inner membrane. The catalysed reaction is Na(+)(in) + 2 H(+)(out) = Na(+)(out) + 2 H(+)(in). Na(+)/H(+) antiporter that extrudes sodium in exchange for external protons. This is Na(+)/H(+) antiporter NhaA from Campylobacter concisus (strain 13826).